We begin with the raw amino-acid sequence, 315 residues long: N-acetylneuraminate lyase (315 aa).

S59 and S60 together coordinate aceneuramate. Y149 (proton donor) is an active-site residue. Catalysis depends on K177, which acts as the Schiff-base intermediate with substrate. Aceneuramate is bound by residues S179, G202, D204, E205, and G221.

Belongs to the DapA family. NanA subfamily. Homotetramer.

It is found in the cytoplasm. The catalysed reaction is aceneuramate = aldehydo-N-acetyl-D-mannosamine + pyruvate. The protein operates within amino-sugar metabolism; N-acetylneuraminate degradation; D-fructose 6-phosphate from N-acetylneuraminate: step 1/5. Its function is as follows. Catalyzes the reversible aldol cleavage of N-acetylneuraminic acid (sialic acid; Neu5Ac) to form pyruvate and N-acetylmannosamine (ManNAc) via a Schiff base intermediate. Cannot use 2,7-anhydro-Neu5Ac. Involved in the degradation of sialic acid, which is present in the host mucus layer and represents a much-coveted source of nutrients for R.gnavus, a prevalent member of the normal gut microbiota. This is N-acetylneuraminate lyase from Mediterraneibacter gnavus (strain ATCC 29149 / DSM 114966 / JCM 6515 / VPI C7-9) (Ruminococcus gnavus).